Here is a 745-residue protein sequence, read N- to C-terminus: Copper-exporting P-type ATPase B (745 aa).

The segment at 1–76 is disordered; the sequence is MNNGIDPENE…GMDHSHMDHE (76 aa). Residues 1 to 108 lie on the Cytoplasmic side of the membrane; sequence MNNGIDPENE…HMGNFKQKFW (108 aa). Residues 36 to 76 show a composition bias toward basic and acidic residues; it reads LQEHGKMENMDQHHTHGHMERHQQMDHGHMSGMDHSHMDHE. 3 repeat units span residues 60 to 71, 73 to 84, and 86 to 97. The tract at residues 60 to 97 is 3 X 12 AA approximate repeats; that stretch reads MDHGHMSGMDHSHMDHEDMSGMNHSHMGHENMSGMDHS. The helical transmembrane segment at 109–128 threads the bilayer; it reads LSLILAIPIILFSPMMGMSF. Residues 129 to 139 lie on the Extracellular side of the membrane; the sequence is PFQVTFPGSNW. Residues 140-160 traverse the membrane as a helical segment; it reads VVLVLATILFIYGGQPFLSGA. At 161 to 170 the chain is on the cytoplasmic side; that stretch reads KMELKQKSPA. Residues 171–191 form a helical membrane-spanning segment; that stretch reads MMTLIAMGITVAYVYSVYSFI. The Extracellular portion of the chain corresponds to 192-200; it reads ANLINPHTH. Residues 201–217 form a helical membrane-spanning segment; that stretch reads VMDFFWELATLIVIMLL. The Cytoplasmic portion of the chain corresponds to 218–359; it reads GHWIEMNAVS…EFLSDKVAKW (142 aa). The chain crosses the membrane as a helical span at residues 360–379; sequence LFYVALVVGIIAFIAWLFLA. The Extracellular segment spans residues 380 to 388; the sequence is NLPDALERM. The chain crosses the membrane as a helical span at residues 389 to 409; that stretch reads VTVFIIACPHALGLAIPLVVA. The Cytoplasmic segment spans residues 410–703; that stretch reads RSTSIAAKNG…QNLWWGAGYN (294 aa). Residue D440 is the 4-aspartylphosphate intermediate of the active site. D638 and D642 together coordinate Mg(2+). The helical transmembrane segment at 704–721 threads the bilayer; that stretch reads IIAIPLAAGILAPIGLIL. Topologically, residues 722 to 723 are extracellular; it reads SP. The helical transmembrane segment at 724–744 threads the bilayer; the sequence is AVGAVLMSLSTVVVALNALTL. A topological domain (cytoplasmic) is located at residue K745.

The protein belongs to the cation transport ATPase (P-type) (TC 3.A.3) family. Type IB subfamily. Monomer.

The protein resides in the cell membrane. The enzyme catalyses Cu(+)(in) + ATP + H2O = Cu(+)(out) + ADP + phosphate + H(+). Its activity is regulated as follows. Inhibited by vanadate. Functionally, involved in copper export. Can also export silver. The chain is Copper-exporting P-type ATPase B (copB) from Enterococcus hirae (strain ATCC 9790 / DSM 20160 / JCM 8729 / LMG 6399 / NBRC 3181 / NCIMB 6459 / NCDO 1258 / NCTC 12367 / WDCM 00089 / R).